Consider the following 224-residue polypeptide: 2-phospho-L-lactate guanylyltransferase (224 aa).

This sequence belongs to the CofC family. As to quaternary structure, homodimer.

It carries out the reaction (2S)-2-phospholactate + GTP + H(+) = (2S)-lactyl-2-diphospho-5'-guanosine + diphosphate. The protein operates within cofactor biosynthesis; coenzyme F420 biosynthesis. Its function is as follows. Guanylyltransferase that catalyzes the activation of (2S)-2-phospholactate (2-PL) as (2S)-lactyl-2-diphospho-5'-guanosine, via the condensation of 2-PL with GTP. It is involved in the biosynthesis of coenzyme F420, a hydride carrier cofactor. The chain is 2-phospho-L-lactate guanylyltransferase from Methanobrevibacter smithii (strain ATCC 35061 / DSM 861 / OCM 144 / PS).